The chain runs to 254 residues: Phosphoribosylaminoimidazole-succinocarboxamide synthase (254 aa).

The protein belongs to the SAICAR synthetase family.

The enzyme catalyses 5-amino-1-(5-phospho-D-ribosyl)imidazole-4-carboxylate + L-aspartate + ATP = (2S)-2-[5-amino-1-(5-phospho-beta-D-ribosyl)imidazole-4-carboxamido]succinate + ADP + phosphate + 2 H(+). It functions in the pathway purine metabolism; IMP biosynthesis via de novo pathway; 5-amino-1-(5-phospho-D-ribosyl)imidazole-4-carboxamide from 5-amino-1-(5-phospho-D-ribosyl)imidazole-4-carboxylate: step 1/2. This Bartonella quintana (strain Toulouse) (Rochalimaea quintana) protein is Phosphoribosylaminoimidazole-succinocarboxamide synthase.